Reading from the N-terminus, the 156-residue chain is Small ribosomal subunit protein uS7 (156 aa).

Belongs to the universal ribosomal protein uS7 family. Part of the 30S ribosomal subunit. Contacts proteins S9 and S11.

In terms of biological role, one of the primary rRNA binding proteins, it binds directly to 16S rRNA where it nucleates assembly of the head domain of the 30S subunit. Is located at the subunit interface close to the decoding center, probably blocks exit of the E-site tRNA. This is Small ribosomal subunit protein uS7 from Acaryochloris marina (strain MBIC 11017).